A 124-amino-acid chain; its full sequence is Glutaredoxin-2 (124 aa).

Cysteines 13 and 16 form a disulfide.

The protein belongs to the glutaredoxin family. In terms of assembly, homodimer.

The protein localises to the host cytoplasm. Its function is as follows. Glutaredoxin necessary for virion morphogenesis and virus replication. Functions as a thiol-disulfide transfer protein between membrane-associated OPG128 and substrates OPG095 or OPG053. The complete pathway for formation of disulfide bonds in intracellular virion membrane proteins sequentially involves oxidation of OPG072, OPG128 and OPG088. Exhibit thioltransferase and dehydroascorbate reductase activities in vitro. The chain is Glutaredoxin-2 (OPG088) from Oryctolagus cuniculus (Rabbit).